A 348-amino-acid polypeptide reads, in one-letter code: Histidinol-phosphate aminotransferase (348 aa).

Position 210 is an N6-(pyridoxal phosphate)lysine (Lys210).

The protein belongs to the class-II pyridoxal-phosphate-dependent aminotransferase family. Histidinol-phosphate aminotransferase subfamily. In terms of assembly, homodimer. Requires pyridoxal 5'-phosphate as cofactor.

It catalyses the reaction L-histidinol phosphate + 2-oxoglutarate = 3-(imidazol-4-yl)-2-oxopropyl phosphate + L-glutamate. The protein operates within amino-acid biosynthesis; L-histidine biosynthesis; L-histidine from 5-phospho-alpha-D-ribose 1-diphosphate: step 7/9. In Pseudomonas putida (strain ATCC 47054 / DSM 6125 / CFBP 8728 / NCIMB 11950 / KT2440), this protein is Histidinol-phosphate aminotransferase.